The chain runs to 434 residues: Bcl-2-like protein 13 (434 aa).

The BH4 signature appears at 14 to 30 (ETKYVVLSYLGLLSQEK). Ser35 carries the phosphoserine modification. The short motif at 97–113 (IEDCLAHLGERVSQDLK) is the BH3 element. A BH1 motif is present at residues 144-154 (ASGWNKLLVPL). A BH2 motif is present at residues 190-203 (FIIQQGGWGSVFSL). A disordered region spans residues 224-245 (LPSDNSGQVSPPESPTVTTSWQ). Over residues 226–245 (SDNSGQVSPPESPTVTTSWQ) the composition is skewed to polar residues. The stretch at 243–253 (SWQSESLPVSL) is one A repeat. Phosphoserine occurs at positions 256, 258, 300, 343, 347, 377, and 387. One copy of the A; approximate repeat lies at 258 to 268 (SWHTESLPVSL). The tract at residues 282–303 (EVKSLDSSGAGEKSENNSSNSD) is disordered. Residues 363 to 398 (RPEAVERAEGAAQLSEERAGSRKKSHTGEAAAVRGA) form a disordered region. Residues 365 to 382 (EAVERAEGAAQLSEERAG) show a composition bias toward basic and acidic residues. A helical transmembrane segment spans residues 409-429 (VLLFGGAAAVAILAVAVGVAL).

It belongs to the Bcl-2 family. As to quaternary structure, monomer.

It localises to the mitochondrion membrane. Its function is as follows. May promote the activation of caspase-3 and apoptosis. In Mus musculus (Mouse), this protein is Bcl-2-like protein 13 (Bcl2l13).